The primary structure comprises 221 residues: CASP-like protein 4C1 (221 aa).

The interval 1 to 21 is disordered; that stretch reads MDSPESSDRGLNPMTPDHGGH. Residues 1–54 are Cytoplasmic-facing; it reads MDSPESSDRGLNPMTPDHGGHNGKVVHYFGQGVEGGPASPRKLGHGHLHPKANT. A helical membrane pass occupies residues 55 to 75; the sequence is ALLLLRLLTFAFSLASLVIMA. The Extracellular segment spans residues 76–101; the sequence is TNSATTTATAGRHRTVNWVDFDTYRY. A helical transmembrane segment spans residues 102–122; that stretch reads VLAACAIVCLYSFAEIGLGLW. The Cytoplasmic portion of the chain corresponds to 123 to 144; sequence YLLKGRMVMPESMAHWFDFGHD. A helical transmembrane segment spans residues 145 to 165; the sequence is QGFAYLIFSACSGATAVAHNL. The Extracellular segment spans residues 166 to 189; that stretch reads RERHILIHGMYGCDEANSFCMKAE. A helical transmembrane segment spans residues 190–210; the sequence is ISIGLAFGAFLFIALSSLLSG. At 211–221 the chain is on the cytoplasmic side; it reads YRLVKWLILGP.

The protein belongs to the Casparian strip membrane proteins (CASP) family. Homodimer and heterodimers.

It is found in the cell membrane. This is CASP-like protein 4C1 from Pteridium aquilinum subsp. aquilinum (Bracken fern).